A 401-amino-acid polypeptide reads, in one-letter code: Phosrestin-1 (401 aa).

Belongs to the arrestin family. In terms of tissue distribution, inner and outer segments, and the inner plexiform regions of the retina.

In terms of biological role, undergoes light-induced phosphorylation, probably plays an important role in the photoreceptor transduction. In Drosophila miranda (Fruit fly), this protein is Phosrestin-1 (Arr2).